The primary structure comprises 130 residues: Holo-[acyl-carrier-protein] synthase (130 aa).

2 residues coordinate Mg(2+): Asp-9 and Glu-58.

Belongs to the P-Pant transferase superfamily. AcpS family. Mg(2+) serves as cofactor.

It localises to the cytoplasm. It catalyses the reaction apo-[ACP] + CoA = holo-[ACP] + adenosine 3',5'-bisphosphate + H(+). In terms of biological role, transfers the 4'-phosphopantetheine moiety from coenzyme A to a Ser of acyl-carrier-protein. This chain is Holo-[acyl-carrier-protein] synthase, found in Mycobacterium sp. (strain JLS).